A 251-amino-acid polypeptide reads, in one-letter code: MNFRIVLLVLVASLAGAQAQVIGHDQVRPFPQPKPVTVSDKAAVKFKPQLKIADGCHPYPAVQKDGSITGGLKWSGPQDGECTGSKLGSQIYARSAWVNDVWAIMYAWYFPKGRGAVPLPLITRLFGHRHNWEYVIVWIDNPKSKNSTILGVSMSAAVGYASQTPPEAMYVDGDSVKLEYYYNHLLGSTSLQLTEDTGEFQDLITWDELSKLARYSLNHTDWDETLFDLAGLKMPLKDGVFQELLDKAWPF.

Positions 1–19 (MNFRIVLLVLVASLAGAQA) are cleaved as a signal peptide. The short motif at 127-133 (GHRHNWE) is the Hepta-peptide GHRHDWE motif element. 2 N-linked (GlcNAc...) asparagine glycosylation sites follow: asparagine 146 and asparagine 218.

The protein belongs to the Necrosis inducing protein (NPP1) family.

Its subcellular location is the secreted. Its function is as follows. Secreted effector that contributes strongly to virulence during infection by P.capsici. This chain is NLP effector protein Pc129485, found in Phytophthora capsici.